Reading from the N-terminus, the 213-residue chain is AN1-type zinc finger protein 5 (213 aa).

The A20-type zinc-finger motif lies at 8-42 (TPGPMLCSTGCGFYGNPRTNGMCSVCYKEHLQRQQ). Zn(2+) is bound by residues cysteine 14, cysteine 18, cysteine 30, and cysteine 33. Positions 39–149 (QRQQNSGRMS…EEKAPELPKP (111 aa)) are disordered. Residues 40-66 (RQQNSGRMSPMGTASGSNSPTSDSASV) show a composition bias toward polar residues. Residues serine 48 and serine 58 each carry the phosphoserine modification. The span at 120-138 (SEPVVTQPSPSVSQPSSSQ) shows a compositional bias: low complexity. Residues 139–148 (SEEKAPELPK) are compositionally biased toward basic and acidic residues. The segment at 148–194 (KPKKNRCFMCRKKVGLTGFDCRCGNLFCGLHRYSDKHNCPYDYKAEA) adopts an AN1-type zinc-finger fold. Zn(2+)-binding residues include cysteine 154, cysteine 157, cysteine 168, cysteine 170, cysteine 175, histidine 178, histidine 184, and cysteine 186. Lysine 209 is subject to N6-acetyllysine.

In terms of assembly, homooligomer and/or heterooligomer. Interacts (via A20-type domain) with IKBKG and RIPK1 and with TRAF6 (via AN1-type domain). Interacts with ubiquitin and polyubiquitinated proteins. Identified in a heterotrimeric complex with ubiquitin and SQSTM1, where ZFAND5 and SQSTM1 both interact with the same ubiquitin molecule.

Its subcellular location is the cytoplasm. Involved in protein degradation via the ubiquitin-proteasome system. May act by anchoring ubiquitinated proteins to the proteasome. Plays a role in ubiquitin-mediated protein degradation during muscle atrophy. Plays a role in the regulation of NF-kappa-B activation and apoptosis. Inhibits NF-kappa-B activation triggered by overexpression of RIPK1 and TRAF6 but not of RELA. Also inhibits tumor necrosis factor (TNF), IL-1 and TLR4-induced NF-kappa-B activation in a dose-dependent manner. Overexpression sensitizes cells to TNF-induced apoptosis. Is a potent inhibitory factor for osteoclast differentiation. In Rattus norvegicus (Rat), this protein is AN1-type zinc finger protein 5 (Zfand5).